Consider the following 394-residue polypeptide: Phosphopentomutase (394 aa).

The Mn(2+) site is built by Asp-10, Asp-282, His-287, Asp-323, His-324, and His-335.

The protein belongs to the phosphopentomutase family. Mn(2+) serves as cofactor.

It is found in the cytoplasm. It catalyses the reaction 2-deoxy-alpha-D-ribose 1-phosphate = 2-deoxy-D-ribose 5-phosphate. The catalysed reaction is alpha-D-ribose 1-phosphate = D-ribose 5-phosphate. It participates in carbohydrate degradation; 2-deoxy-D-ribose 1-phosphate degradation; D-glyceraldehyde 3-phosphate and acetaldehyde from 2-deoxy-alpha-D-ribose 1-phosphate: step 1/2. Functionally, isomerase that catalyzes the conversion of deoxy-ribose 1-phosphate (dRib-1-P) and ribose 1-phosphate (Rib-1-P) to deoxy-ribose 5-phosphate (dRib-5-P) and ribose 5-phosphate (Rib-5-P), respectively. The chain is Phosphopentomutase from Dictyoglomus turgidum (strain DSM 6724 / Z-1310).